The following is a 480-amino-acid chain: Protein nucleotidyltransferase YdiU (480 aa).

ATP is bound by residues Gly87, Gly89, Arg90, Lys110, Asp122, Gly123, Arg173, and Arg180. Asp245 acts as the Proton acceptor in catalysis. Residues Asn246 and Asp255 each coordinate Mg(2+). Position 255 (Asp255) interacts with ATP.

Belongs to the SELO family. The cofactor is Mg(2+). Requires Mn(2+) as cofactor.

The enzyme catalyses L-seryl-[protein] + ATP = 3-O-(5'-adenylyl)-L-seryl-[protein] + diphosphate. The catalysed reaction is L-threonyl-[protein] + ATP = 3-O-(5'-adenylyl)-L-threonyl-[protein] + diphosphate. It carries out the reaction L-tyrosyl-[protein] + ATP = O-(5'-adenylyl)-L-tyrosyl-[protein] + diphosphate. It catalyses the reaction L-histidyl-[protein] + UTP = N(tele)-(5'-uridylyl)-L-histidyl-[protein] + diphosphate. The enzyme catalyses L-seryl-[protein] + UTP = O-(5'-uridylyl)-L-seryl-[protein] + diphosphate. The catalysed reaction is L-tyrosyl-[protein] + UTP = O-(5'-uridylyl)-L-tyrosyl-[protein] + diphosphate. Functionally, nucleotidyltransferase involved in the post-translational modification of proteins. It can catalyze the addition of adenosine monophosphate (AMP) or uridine monophosphate (UMP) to a protein, resulting in modifications known as AMPylation and UMPylation. The polypeptide is Protein nucleotidyltransferase YdiU (Jannaschia sp. (strain CCS1)).